The primary structure comprises 244 residues: Probable ABC transporter ATP-binding protein in ycf23-apcF intergenic region (244 aa).

An ABC transporter domain is found at 9–241 (LEINNLTVSY…KLSTLFGEHI (233 aa)). Residue 41–48 (GPNGAGKS) coordinates ATP.

It belongs to the ABC transporter superfamily.

It is found in the plastid. It localises to the cyanelle. In Cyanophora paradoxa, this protein is Probable ABC transporter ATP-binding protein in ycf23-apcF intergenic region.